The primary structure comprises 174 residues: Small ribosomal subunit protein uS5 (174 aa).

In terms of domain architecture, S5 DRBM spans 19–82 (LREKMIAINR…EEARRNMTKI (64 aa)).

Belongs to the universal ribosomal protein uS5 family. Part of the 30S ribosomal subunit. Contacts proteins S4 and S8.

With S4 and S12 plays an important role in translational accuracy. In terms of biological role, located at the back of the 30S subunit body where it stabilizes the conformation of the head with respect to the body. This chain is Small ribosomal subunit protein uS5, found in Albidiferax ferrireducens (strain ATCC BAA-621 / DSM 15236 / T118) (Rhodoferax ferrireducens).